A 352-amino-acid chain; its full sequence is Heat-inducible transcription repressor HrcA (352 aa).

The protein belongs to the HrcA family.

In terms of biological role, negative regulator of class I heat shock genes (grpE-dnaK-dnaJ and groELS operons). Prevents heat-shock induction of these operons. This Ralstonia nicotianae (strain ATCC BAA-1114 / GMI1000) (Ralstonia solanacearum) protein is Heat-inducible transcription repressor HrcA.